Consider the following 460-residue polypeptide: Piperamide synthase (460 aa).

The segment at 1–23 (MASSQLEFNVERKQPELLGPAEP) is disordered. Catalysis depends on proton acceptor residues His-168 and Asp-383. The Microbody targeting signal signature appears at 458 to 460 (SRM).

The protein belongs to the plant acyltransferase family. As to quaternary structure, monomer. Confined to immature fruits perisperm. Also detectable in roots.

It localises to the cytoplasm. It catalyses the reaction piperidine + (E,E)-piperoyl-CoA = piperine + CoA + H(+). The protein operates within aromatic compound metabolism. Functionally, involved in the biosynthesis of aromatic piperamides natural products such as piperine (1-piperoyl-piperidine), the pungent principle contributing, together with several terpenoids, to the aromatic properties of black pepper fruits, and displaying numerous pharmacological activities such as antiproliferative, antitumor, antiangiogenesis, antioxidant, antidiabetic, antiobesity, cardioprotective, antimicrobial, antiaging, and immunomodulatory effects. Can use piperidine and benzylamine as acceptors and various CoA-esters with aliphatic and aromatic amines as CoA-donors, including piperoyl-CoA, hexanoyl-CoA and octanoyl-CoA, and, to a lower extent, benzoyl-CoA. Mediates the conversion of piperidine to three piperine isomers in the presence of piperoyl-CoA. Its ability to convert in vitro piperidine to hexanoylpiperidine in the presence of hexanoyl-CoA, and to octanoylpiperidine in the presence of octanoyl-CoA is not confirmed in vivo according to fruits metabolome analysis. This is Piperamide synthase from Piper nigrum (Black pepper).